The sequence spans 238 residues: Calmodulin-binding protein 25 (238 aa).

Over residues 68 to 78 (STNTLSSTVSG) the composition is skewed to polar residues. A disordered region spans residues 68–87 (STNTLSSTVSGASDPEIIGG). The Bipartite nuclear localization signal signature appears at 92–108 (KRNCLLTDGKAAKRRAR). The VQ signature appears at 125 to 134 (FRQMVQQVTG). The disordered stretch occupies residues 201–220 (SSVGLPSGKPSATADPGGSA).

Interacts with calmodulin (CaM). Interacts with WRKY25 and WRKY51. In terms of tissue distribution, expressed in leaves, flowers and siliques.

The protein localises to the nucleus. Functionally, calmodulin-binding protein that functions as a negative regulator of osmotic stress tolerance. This Arabidopsis thaliana (Mouse-ear cress) protein is Calmodulin-binding protein 25.